Consider the following 242-residue polypeptide: Ribosomal RNA small subunit methyltransferase G (242 aa).

S-adenosyl-L-methionine-binding positions include Gly-78, Leu-83, 130-131 (AE), and Arg-151.

Belongs to the methyltransferase superfamily. RNA methyltransferase RsmG family.

The protein localises to the cytoplasm. Specifically methylates the N7 position of guanine in position 518 of 16S rRNA. The polypeptide is Ribosomal RNA small subunit methyltransferase G (Salinispora arenicola (strain CNS-205)).